The following is a 275-amino-acid chain: Diaminopimelate epimerase (275 aa).

3 residues coordinate substrate: N12, Q45, and N65. The Proton donor role is filled by C74. Substrate is bound by residues G75–N76, N158, N191, and E209–R210. C218 functions as the Proton acceptor in the catalytic mechanism. Residue G219–T220 participates in substrate binding.

It belongs to the diaminopimelate epimerase family. Homodimer.

It localises to the cytoplasm. It catalyses the reaction (2S,6S)-2,6-diaminopimelate = meso-2,6-diaminopimelate. It participates in amino-acid biosynthesis; L-lysine biosynthesis via DAP pathway; DL-2,6-diaminopimelate from LL-2,6-diaminopimelate: step 1/1. Functionally, catalyzes the stereoinversion of LL-2,6-diaminopimelate (L,L-DAP) to meso-diaminopimelate (meso-DAP), a precursor of L-lysine and an essential component of the bacterial peptidoglycan. The polypeptide is Diaminopimelate epimerase (Shewanella oneidensis (strain ATCC 700550 / JCM 31522 / CIP 106686 / LMG 19005 / NCIMB 14063 / MR-1)).